We begin with the raw amino-acid sequence, 31 residues long: Nemertide alpha-6 (31 aa).

3 disulfide bridges follow: Cys-2/Cys-16, Cys-9/Cys-20, and Cys-15/Cys-26. 2 positions are modified to 4-hydroxyproline: Pro-28 and Pro-29.

The protein belongs to the nemertide family. Confined to the epidermis and to the mucus layer.

The protein resides in the secreted. Its function is as follows. Highly potent toxin against both insect and some mammalian sodium channels (Nav). It potently inhibits inactivation of insect sodium channels of B.germanica (BgNav1) (EC(50)=2.6 nM) and also delays the inactivation of mammalian Nav with potent activity on Nav1.1/SCN1A (hNav1.1/SCN1A; EC(50)=7.9 nM, rNav1.2/SCN2A; EC(50)=24.3 nM, rNav1.3/SCN3A; EC(50)=105.6 nM, rNav1.4/SCN4A; EC(50)=46.4 nM, hNav1.5/SCN5A; EC(50)=215.2 nM, mNav1.6/SCN8A; EC(50)=36.3 nM, hNav1.9/SCN9A; EC(50)=97.2 nM). 1 uM is enough to completely inhibits the inactivation, resulting in sustained non-inactivating currents. In addition, the toxin significantly enhances the recovery from inactivation, and the open state is not required for the toxin to interact with the channel. In vivo, injection into brine shrimp (Artemia salina) stops movement or causes death after 24 hours (EC(50)=2.8 uM). The polypeptide is Nemertide alpha-6 (Lineus sanguineus (Ribbon worm)).